Reading from the N-terminus, the 517-residue chain is Maturase K (517 aa).

This sequence belongs to the intron maturase 2 family. MatK subfamily.

The protein resides in the plastid. It localises to the chloroplast. Its function is as follows. Usually encoded in the trnK tRNA gene intron. Probably assists in splicing its own and other chloroplast group II introns. This chain is Maturase K, found in Caryota mitis (Burmese fishtail palm).